The sequence spans 110 residues: Large ribosomal subunit protein uL22 (110 aa).

This sequence belongs to the universal ribosomal protein uL22 family. Part of the 50S ribosomal subunit.

This protein binds specifically to 23S rRNA; its binding is stimulated by other ribosomal proteins, e.g. L4, L17, and L20. It is important during the early stages of 50S assembly. It makes multiple contacts with different domains of the 23S rRNA in the assembled 50S subunit and ribosome. Its function is as follows. The globular domain of the protein is located near the polypeptide exit tunnel on the outside of the subunit, while an extended beta-hairpin is found that lines the wall of the exit tunnel in the center of the 70S ribosome. In Leptospira interrogans serogroup Icterohaemorrhagiae serovar copenhageni (strain Fiocruz L1-130), this protein is Large ribosomal subunit protein uL22.